A 624-amino-acid chain; its full sequence is Bifunctional 3'-phosphoadenosine 5'-phosphosulfate synthase 1 (624 aa).

Methionine 1 carries the post-translational modification N-acetylmethionine. An adenylyl-sulfate kinase region spans residues 1–225; that stretch reads MEIPGSLCKK…VVELLQERDI (225 aa). Lysine 12 is modified (N6-acetyllysine). 62–67 is an ATP binding site; it reads GAGKTT. Adenosine 5'-phosphosulfate-binding positions include 89 to 92, phenylalanine 101, 106 to 109, 132 to 133, lysine 171, and 184 to 185; these read DNIR, REEN, IS, and GF. ATP-binding positions include cysteine 207, cysteine 212, 419 to 422, 521 to 525, and alanine 563; these read QLRN and GRDPA. Residues 234–624 form a sulfate adenylyltransferase region; sequence VKELYVPENK…TEYYKSLEKA (391 aa).

The protein in the N-terminal section; belongs to the APS kinase family. This sequence in the C-terminal section; belongs to the sulfate adenylyltransferase family. As to quaternary structure, homodimer. As to expression, expressed in testis, pancreas, kidney, thymus, prostate, ovary, small intestine, colon, leukocytes and liver. Also expressed in high endothelial venules (HEV) cells and in cartilage.

It carries out the reaction sulfate + ATP + H(+) = adenosine 5'-phosphosulfate + diphosphate. It catalyses the reaction adenosine 5'-phosphosulfate + ATP = 3'-phosphoadenylyl sulfate + ADP + H(+). It participates in sulfur metabolism; sulfate assimilation. Inhibited by chlorate. The kinase activity is subject to inhibition by the substrate adenylyl sulfate. In terms of biological role, bifunctional enzyme with both ATP sulfurylase and APS kinase activity, which mediates two steps in the sulfate activation pathway. The first step is the transfer of a sulfate group to ATP to yield adenosine 5'-phosphosulfate (APS), and the second step is the transfer of a phosphate group from ATP to APS yielding 3'-phosphoadenylylsulfate (PAPS: activated sulfate donor used by sulfotransferase). In mammals, PAPS is the sole source of sulfate; APS appears to be only an intermediate in the sulfate-activation pathway. Required for normal biosynthesis of sulfated L-selectin ligands in endothelial cells. The sequence is that of Bifunctional 3'-phosphoadenosine 5'-phosphosulfate synthase 1 (PAPSS1) from Homo sapiens (Human).